A 426-amino-acid chain; its full sequence is uncharacterized protein (426 aa).

The interval 23–42 (ENPRPTNNPSTSHPSDSYST) is disordered. Residues 26–42 (RPTNNPSTSHPSDSYST) show a composition bias toward polar residues.

It belongs to the serpin family.

This is an uncharacterized protein from Thermococcus kodakarensis (strain ATCC BAA-918 / JCM 12380 / KOD1) (Pyrococcus kodakaraensis (strain KOD1)).